The following is a 40-amino-acid chain: Cell division inhibitor MciZ (40 aa).

As to quaternary structure, interacts with FtsZ. Binds to the C-terminal polymerization interface of FtsZ. Binds to FtsZ filaments.

Highly effective in inhibiting polymerization at low and intermediate concentrations of GTP and only partially effective at high GTP concentrations. Its function is as follows. Blocks Z-ring formation in the mother cell during sporulation by inhibiting the polymerization of FtsZ. Binds to the minus end of FtsZ and functions as a filament-capping protein. At high concentrations, is capable of both capping and sequestration of FtsZ. Decreases the GTPase activity of FtsZ. This chain is Cell division inhibitor MciZ, found in Bacillus subtilis (strain 168).